The sequence spans 238 residues: 1-(5-phosphoribosyl)-5-[(5-phosphoribosylamino)methylideneamino] imidazole-4-carboxamide isomerase (238 aa).

The active-site Proton acceptor is D8. The active-site Proton donor is the D129.

The protein belongs to the HisA/HisF family.

It localises to the cytoplasm. The catalysed reaction is 1-(5-phospho-beta-D-ribosyl)-5-[(5-phospho-beta-D-ribosylamino)methylideneamino]imidazole-4-carboxamide = 5-[(5-phospho-1-deoxy-D-ribulos-1-ylimino)methylamino]-1-(5-phospho-beta-D-ribosyl)imidazole-4-carboxamide. The protein operates within amino-acid biosynthesis; L-histidine biosynthesis; L-histidine from 5-phospho-alpha-D-ribose 1-diphosphate: step 4/9. The sequence is that of 1-(5-phosphoribosyl)-5-[(5-phosphoribosylamino)methylideneamino] imidazole-4-carboxamide isomerase from Clostridium kluyveri (strain NBRC 12016).